Consider the following 450-residue polypeptide: Ornithine decarboxylase (450 aa).

Lys-59 bears the N6-(pyridoxal phosphate)lysine mark. Residues Ser-190, Gly-227, and 264-267 (EPGR) contribute to the pyridoxal 5'-phosphate site. Ser-293 carries the phosphoserine; by CK2 modification. 321 to 322 (YD) lines the substrate pocket. Cys-350 (proton donor; shared with dimeric partner) is an active-site residue. Asp-351 is a binding site for substrate. Tyr-379 is a pyridoxal 5'-phosphate binding site.

It belongs to the Orn/Lys/Arg decarboxylase class-II family. Homodimer. Only the dimer is catalytically active, as the active sites are constructed of residues from both monomers. Pyridoxal 5'-phosphate serves as cofactor.

It carries out the reaction L-ornithine + H(+) = putrescine + CO2. It functions in the pathway amine and polyamine biosynthesis; putrescine biosynthesis via L-ornithine pathway; putrescine from L-ornithine: step 1/1. With respect to regulation, inhibited by antizymes (AZs) in response to polyamine levels. AZs inhibit the assembly of the functional homodimer by binding to ODC monomers and targeting them for ubiquitin-independent proteolytic destruction by the 26S proteasome. Its function is as follows. Catalyzes the first and rate-limiting step of polyamine biosynthesis that converts ornithine into putrescine, which is the precursor for the polyamines, spermidine and spermine. Polyamines are essential for cell proliferation and are implicated in cellular processes, ranging from DNA replication to apoptosis. In Gallus gallus (Chicken), this protein is Ornithine decarboxylase (ODC1).